The following is a 169-amino-acid chain: Cell division inhibitor SulA (169 aa).

Residues 1 to 16 (MFTSAHANRSPLTSAS) are compositionally biased toward polar residues. Residues 1-20 (MFTSAHANRSPLTSASVRRP) are disordered. Residues 106–112 (ALRTGNY) form a ftsZ binding region. The segment at 162–169 (KIHSNLYH) is lon protease binding.

It belongs to the SulA family. In terms of assembly, interacts with FtsZ. Is rapidly cleaved and degraded by the Lon protease once DNA damage is repaired.

Functionally, component of the SOS system and an inhibitor of cell division. Accumulation of SulA causes rapid cessation of cell division and the appearance of long, non-septate filaments. In the presence of GTP, binds a polymerization-competent form of FtsZ in a 1:1 ratio, thus inhibiting FtsZ polymerization and therefore preventing it from participating in the assembly of the Z ring. This mechanism prevents the premature segregation of damaged DNA to daughter cells during cell division. This Klebsiella aerogenes (Enterobacter aerogenes) protein is Cell division inhibitor SulA.